Consider the following 97-residue polypeptide: Small ribosomal subunit protein bS18c (97 aa).

Belongs to the bacterial ribosomal protein bS18 family. As to quaternary structure, part of the 30S ribosomal subunit.

The protein localises to the plastid. Its subcellular location is the chloroplast. The chain is Small ribosomal subunit protein bS18c from Oenothera glazioviana (Large-flowered evening primrose).